We begin with the raw amino-acid sequence, 301 residues long: uncharacterized protein (301 aa).

Disordered regions lie at residues 167 to 186 (DVHL…PKER) and 225 to 244 (ASES…EGAS). Positions 170–181 (LNSTTPPHTAQV) are enriched in polar residues. Residues 226-237 (SESSLETSSVSS) are compositionally biased toward low complexity.

This is an uncharacterized protein from Mus musculus (Mouse).